The primary structure comprises 513 residues: Maturase K (513 aa).

It belongs to the intron maturase 2 family. MatK subfamily.

The protein resides in the plastid. The protein localises to the chloroplast. Its function is as follows. Usually encoded in the trnK tRNA gene intron. Probably assists in splicing its own and other chloroplast group II introns. In Pinus resinosa (Red pine), this protein is Maturase K.